The chain runs to 119 residues: Ribonuclease P protein component (119 aa).

Belongs to the RnpA family. Consists of a catalytic RNA component (M1 or rnpB) and a protein subunit.

It catalyses the reaction Endonucleolytic cleavage of RNA, removing 5'-extranucleotides from tRNA precursor.. RNaseP catalyzes the removal of the 5'-leader sequence from pre-tRNA to produce the mature 5'-terminus. It can also cleave other RNA substrates such as 4.5S RNA. The protein component plays an auxiliary but essential role in vivo by binding to the 5'-leader sequence and broadening the substrate specificity of the ribozyme. This Escherichia coli O157:H7 protein is Ribonuclease P protein component.